We begin with the raw amino-acid sequence, 138 residues long: UPF0201 protein TK1335 (138 aa).

Belongs to the UPF0201 family.

The sequence is that of UPF0201 protein TK1335 from Thermococcus kodakarensis (strain ATCC BAA-918 / JCM 12380 / KOD1) (Pyrococcus kodakaraensis (strain KOD1)).